We begin with the raw amino-acid sequence, 228 residues long: Cytidylate kinase (228 aa).

17–25 (GPTASGKGT) is an ATP binding site.

It belongs to the cytidylate kinase family. Type 1 subfamily.

It is found in the cytoplasm. It carries out the reaction CMP + ATP = CDP + ADP. It catalyses the reaction dCMP + ATP = dCDP + ADP. This Paraburkholderia phymatum (strain DSM 17167 / CIP 108236 / LMG 21445 / STM815) (Burkholderia phymatum) protein is Cytidylate kinase.